Here is a 150-residue protein sequence, read N- to C-terminus: D-aminoacyl-tRNA deacylase (150 aa).

The Gly-cisPro motif, important for rejection of L-amino acids signature appears at 138-139 (GP).

This sequence belongs to the DTD family. In terms of assembly, homodimer.

It localises to the cytoplasm. The catalysed reaction is glycyl-tRNA(Ala) + H2O = tRNA(Ala) + glycine + H(+). It catalyses the reaction a D-aminoacyl-tRNA + H2O = a tRNA + a D-alpha-amino acid + H(+). In terms of biological role, an aminoacyl-tRNA editing enzyme that deacylates mischarged D-aminoacyl-tRNAs. Also deacylates mischarged glycyl-tRNA(Ala), protecting cells against glycine mischarging by AlaRS. Acts via tRNA-based rather than protein-based catalysis; rejects L-amino acids rather than detecting D-amino acids in the active site. By recycling D-aminoacyl-tRNA to D-amino acids and free tRNA molecules, this enzyme counteracts the toxicity associated with the formation of D-aminoacyl-tRNA entities in vivo and helps enforce protein L-homochirality. The chain is D-aminoacyl-tRNA deacylase from Dechloromonas aromatica (strain RCB).